Here is a 533-residue protein sequence, read N- to C-terminus: NEDD8-activating enzyme E1 regulatory subunit (533 aa).

Residues 330–343 (DMIADSDKFIKLQN) are interaction with uba3.

This sequence belongs to the ubiquitin-activating E1 family. ULA1 subfamily. Heterodimer of uba3 and nae1. The complex binds nedd8 and ube2m.

It participates in protein modification; protein neddylation. Its function is as follows. Regulatory subunit of the dimeric uba3-nae1 E1 enzyme. E1 activates nedd8 by first adenylating its C-terminal glycine residue with ATP, thereafter linking this residue to the side chain of the catalytic cysteine, yielding a nedd8-uba3 thioester and free AMP. E1 finally transfers nedd8 to the catalytic cysteine of ube2m. The covalent attachment of nedd8 to target proteins is known as 'neddylation' and the process is involved in the regulation of cell growth, viability and development. The sequence is that of NEDD8-activating enzyme E1 regulatory subunit (nae1) from Danio rerio (Zebrafish).